We begin with the raw amino-acid sequence, 132 residues long: Large ribosomal subunit protein bL19 (132 aa).

This sequence belongs to the bacterial ribosomal protein bL19 family.

Functionally, this protein is located at the 30S-50S ribosomal subunit interface and may play a role in the structure and function of the aminoacyl-tRNA binding site. This is Large ribosomal subunit protein bL19 from Persephonella marina (strain DSM 14350 / EX-H1).